Reading from the N-terminus, the 609-residue chain is UvrABC system protein C (609 aa).

One can recognise a GIY-YIG domain in the interval 16 to 94; sequence SSAGVYRMYD…IKQYMPKYNV (79 aa). A UVR domain is found at 203-238; sequence KQVISELVAKMEEAAEQQAYEQAARFRDQIMALRRV.

This sequence belongs to the UvrC family. Interacts with UvrB in an incision complex.

It is found in the cytoplasm. The UvrABC repair system catalyzes the recognition and processing of DNA lesions. UvrC both incises the 5' and 3' sides of the lesion. The N-terminal half is responsible for the 3' incision and the C-terminal half is responsible for the 5' incision. In Shewanella oneidensis (strain ATCC 700550 / JCM 31522 / CIP 106686 / LMG 19005 / NCIMB 14063 / MR-1), this protein is UvrABC system protein C.